A 312-amino-acid polypeptide reads, in one-letter code: Acetyl-coenzyme A carboxylase carboxyl transferase subunit alpha (312 aa).

Positions 36–286 (RLDKEVKSIY…KEYFLDALRT (251 aa)) constitute a CoA carboxyltransferase C-terminal domain.

It belongs to the AccA family. Acetyl-CoA carboxylase is a heterohexamer composed of biotin carboxyl carrier protein (AccB), biotin carboxylase (AccC) and two subunits each of ACCase subunit alpha (AccA) and ACCase subunit beta (AccD).

The protein resides in the cytoplasm. It catalyses the reaction N(6)-carboxybiotinyl-L-lysyl-[protein] + acetyl-CoA = N(6)-biotinyl-L-lysyl-[protein] + malonyl-CoA. It participates in lipid metabolism; malonyl-CoA biosynthesis; malonyl-CoA from acetyl-CoA: step 1/1. Component of the acetyl coenzyme A carboxylase (ACC) complex. First, biotin carboxylase catalyzes the carboxylation of biotin on its carrier protein (BCCP) and then the CO(2) group is transferred by the carboxyltransferase to acetyl-CoA to form malonyl-CoA. This is Acetyl-coenzyme A carboxylase carboxyl transferase subunit alpha from Helicobacter pylori (strain Shi470).